The chain runs to 438 residues: MKSWSSRPVPELPGTGTAPRVHDTSTGQLEPLAARDGRASLYVCGITPYDATHMGHAATYVAFDLLHRLWRDAGWSVDYVQNVTDVDDPLLERADATGVDWRELAESQTELFRTDMSALNVLAPQHYVGATEVVDRIVPAVERLLERGLAYRAPAGTGQGGEPAPAGDVYFDVDAAGALRAEDPDAWVVGSTCRLAGERDRMMPLFADHGGDPDRTGKRDPMDPLLWRAHRAGEPSWDGASLGPGRPGWHIECSVIALDLLPRPFTVQGGGSDLAFPHHDMGAGHAYALSGQPMAEHYVHTAMVGLDGEKMSKSRGNLVLVSTLRAQGMDPAVIRLAILANHYRTDWFWTDELLEQARRRLGTWREAAAKQETAGADAMLEAVRAALGEDLNSPAALIAVDAWAARNLGGAAARGSGASSQDTRLARDTVEALLGVVL.

A disordered region spans residues 1 to 27 (MKSWSSRPVPELPGTGTAPRVHDTSTG). Cys44 serves as a coordination point for Zn(2+). Residues 44 to 47 (CGIT), Thr59, and 82 to 84 (NVT) each bind L-cysteinyl-5'-AMP. A 'HIGH' region motif is present at residues 46–56 (ITPYDATHMGH). A 'ERGGDP' region motif is present at residues 208-213 (DHGGDP). Trp249 is a binding site for L-cysteinyl-5'-AMP. A Zn(2+)-binding site is contributed by Cys253. An L-cysteinyl-5'-AMP-binding site is contributed by 271–273 (GSD). Position 278 (His278) interacts with Zn(2+). Val304 is a binding site for L-cysteinyl-5'-AMP. Positions 310 to 314 (KMSKS) match the 'KMSKS' region motif.

This sequence belongs to the class-I aminoacyl-tRNA synthetase family. MshC subfamily. In terms of assembly, monomer. Zn(2+) is required as a cofactor.

It catalyses the reaction 1D-myo-inositol 2-amino-2-deoxy-alpha-D-glucopyranoside + L-cysteine + ATP = 1D-myo-inositol 2-(L-cysteinylamino)-2-deoxy-alpha-D-glucopyranoside + AMP + diphosphate + H(+). Functionally, catalyzes the ATP-dependent condensation of GlcN-Ins and L-cysteine to form L-Cys-GlcN-Ins. The sequence is that of L-cysteine:1D-myo-inositol 2-amino-2-deoxy-alpha-D-glucopyranoside ligase from Kocuria rhizophila (strain ATCC 9341 / DSM 348 / NBRC 103217 / DC2201).